The sequence spans 259 residues: Methyltransferase sdnD (259 aa).

It belongs to the FkbM methyltransferase family.

It functions in the pathway antibiotic biosynthesis. In terms of biological role, methyltransferase; part of the gene cluster that mediates the biosynthesis of sordarin and hypoxysordarin, glycoside antibiotics with a unique tetracyclic diterpene aglycone structure. First, the geranylgeranyl diphosphate synthase sdnC constructs GGDP from farnesyl diphosphate and isopentenyl diphosphate. The diterpene cyclase sdnA then catalyzes the cyclization of GGDP to afford cycloaraneosene. Cycloaraneosene is then hydroxylated four times by the putative cytochrome P450 monooxygenases sdnB, sdnE, sdnF and sdnH to give a hydroxylated cycloaraneosene derivative such as cycloaraneosene-8,9,13,19-tetraol. Although the order of the hydroxylations is unclear, at least C8, C9 and C13 of the cycloaraneosene skeleton are hydroxylated before the sordaricin formation. Dehydration of the 13-hydroxy group of the hydroxylated cycloaraneosene derivative might be catalyzed by an unassigned hypothetical protein such as sdnG and sdnP to construct the cyclopentadiene moiety. The FAD-dependent oxidoreductase sdnN is proposed to catalyze the oxidation at C9 of the hydroxylated cycloaraneosene derivative and also catalyze the Baeyer-Villiger oxidation to give the lactone intermediate. The presumed lactone intermediate would be hydrolyzed to give an acrolein moiety and a carboxylate moiety. Then, [4+2]cycloaddition would occur between the acrolein moiety and the cyclopentadiene moiety to give sordaricin. SdnN might also be involved in the [4+2]cycloaddition after the hypothesized oxidation to accommodate the oxidized product and prompt the [4+2]cycloaddition. GDP-6-deoxy-D-altrose may be biosynthesized from GDP-D-mannose by the putative GDP-mannose-4,6-dehydratase sdnI and the short-chain dehydrogenase sdnK. The glycosyltransferase sdnJ catalyzes the attachment of 6-deoxy-D-altrose onto the 19-hydroxy group of sordaricin to give 4'-O-demethylsordarin. The methyltransferase sdnD would complete the biosynthesis of sordarin. Sordarin can be further modified into hypoxysordarin. The unique acyl chain at the 3'-hydroxy group of hypoxysordarin would be constructed by an iterative type I PKS sdnO and the trans-acting polyketide methyltransferase sdnL. SdnL would be responsible for the introduction of an alpha-methyl group of the polyketide chain. Alternatively, the beta-lactamase-like protein sdnR might be responsible for the cleavage and transfer of the polyketide chain from the PKS sdnO to sordarin. Two putative cytochrome P450 monooxygenases, sdnQ and sdnT, might catalyze the epoxidations of the polyketide chain to complete the biosynthesis of hypoxysordarin. Transcriptional regulators sdnM and sdnS are presumably encoded for the transcriptional regulation of the expression of the sdn gene cluster. This is Methyltransferase sdnD from Sordaria araneosa (Pleurage araneosa).